A 467-amino-acid polypeptide reads, in one-letter code: 3-isopropylmalate dehydratase large subunit (467 aa).

[4Fe-4S] cluster contacts are provided by cysteine 348, cysteine 409, and cysteine 412. Residues 423–448 (NERSISTSNRNFEGRQGKGSRTHLAS) form a disordered region.

Belongs to the aconitase/IPM isomerase family. LeuC type 1 subfamily. In terms of assembly, heterodimer of LeuC and LeuD. [4Fe-4S] cluster is required as a cofactor.

It catalyses the reaction (2R,3S)-3-isopropylmalate = (2S)-2-isopropylmalate. It participates in amino-acid biosynthesis; L-leucine biosynthesis; L-leucine from 3-methyl-2-oxobutanoate: step 2/4. In terms of biological role, catalyzes the isomerization between 2-isopropylmalate and 3-isopropylmalate, via the formation of 2-isopropylmaleate. The sequence is that of 3-isopropylmalate dehydratase large subunit from Bifidobacterium longum (strain DJO10A).